Consider the following 215-residue polypeptide: Pyrrolidone-carboxylate peptidase (215 aa).

Residues E80, C143, and H167 contribute to the active site.

This sequence belongs to the peptidase C15 family. In terms of assembly, homotetramer.

The protein localises to the cytoplasm. It catalyses the reaction Release of an N-terminal pyroglutamyl group from a polypeptide, the second amino acid generally not being Pro.. Removes 5-oxoproline from various penultimate amino acid residues except L-proline. In Brevibacillus brevis (strain 47 / JCM 6285 / NBRC 100599), this protein is Pyrrolidone-carboxylate peptidase.